The following is a 313-amino-acid chain: 4-diphosphocytidyl-2-C-methyl-D-erythritol kinase (313 aa).

Lysine 27 is a catalytic residue. Residue 110–120 participates in ATP binding; sequence PIGGGVGGGSS. Aspartate 152 is a catalytic residue.

This sequence belongs to the GHMP kinase family. IspE subfamily.

The catalysed reaction is 4-CDP-2-C-methyl-D-erythritol + ATP = 4-CDP-2-C-methyl-D-erythritol 2-phosphate + ADP + H(+). The protein operates within isoprenoid biosynthesis; isopentenyl diphosphate biosynthesis via DXP pathway; isopentenyl diphosphate from 1-deoxy-D-xylulose 5-phosphate: step 3/6. Functionally, catalyzes the phosphorylation of the position 2 hydroxy group of 4-diphosphocytidyl-2C-methyl-D-erythritol. In Histophilus somni (strain 129Pt) (Haemophilus somnus), this protein is 4-diphosphocytidyl-2-C-methyl-D-erythritol kinase.